Reading from the N-terminus, the 651-residue chain is Mediator of RNA polymerase II transcription subunit 17 (651 aa).

Positions 51–83 (QGSGSEEEEAAGAEGDAQDWAGAGSSADQDDEE) are disordered. Positions 62–74 (GAEGDAQDWAGAG) are enriched in low complexity.

It belongs to the Mediator complex subunit 17 family. In terms of assembly, component of the Mediator complex, which is composed of MED1, MED4, MED6, MED7, MED8, MED9, MED10, MED11, MED12, MED13, MED13L, MED14, MED15, MED16, MED17, MED18, MED19, MED20, MED21, MED22, MED23, MED24, MED25, MED26, MED27, MED29, MED30, MED31, CCNC, CDK8 and CDC2L6/CDK11. The MED12, MED13, CCNC and CDK8 subunits form a distinct module termed the CDK8 module. Mediator containing the CDK8 module is less active than Mediator lacking this module in supporting transcriptional activation. Individual preparations of the Mediator complex lacking one or more distinct subunits have been variously termed ARC, CRSP, DRIP, PC2, SMCC and TRAP. Interacts with GATA1, PPARG and STAT2.

The protein localises to the nucleus. Component of the Mediator complex, a coactivator involved in the regulated transcription of nearly all RNA polymerase II-dependent genes. Mediator functions as a bridge to convey information from gene-specific regulatory proteins to the basal RNA polymerase II transcription machinery. Mediator is recruited to promoters by direct interactions with regulatory proteins and serves as a scaffold for the assembly of a functional preinitiation complex with RNA polymerase II and the general transcription factors. This Bos taurus (Bovine) protein is Mediator of RNA polymerase II transcription subunit 17 (MED17).